The primary structure comprises 421 residues: Early growth response protein 2 (421 aa).

Positions 127-145 are enriched in low complexity; it reads CSSTSSSNASSGSPNLSCS. 3 disordered regions span residues 127–152, 179–200, and 223–288; these read CSSTSSSNASSGSPNLSCSMSHPQSD, SPTAASLPPPPSYPSPKGASDG, and SDRK…ERPY. Residues 236-247 show a composition bias toward polar residues; that stretch reads PLSTIRNFTLGG. 3 C2H2-type zinc fingers span residues 288 to 312, 318 to 340, and 346 to 368; these read YPCPAEGCDRRFSRSDELTRHIRIH, FQCRICMRNFSRSDHLTTHIRTH, and FACDYCGRKFARSDERKRHTKIH.

The protein belongs to the EGR C2H2-type zinc-finger protein family.

It localises to the nucleus. Sequence-specific DNA-binding transcription factor. This Xenopus laevis (African clawed frog) protein is Early growth response protein 2 (egr2).